A 228-amino-acid chain; its full sequence is Leucine rich adaptor protein 1-like (228 aa).

An N-acetylmethionine modification is found at methionine 1. The disordered stretch occupies residues 1 to 89; the sequence is MEDSPLPDLR…GSPRGSHSSA (89 aa). 2 stretches are compositionally biased toward basic and acidic residues: residues 8 to 21 and 28 to 42; these read DLRD…RKVP and LRGE…DRDP. Over residues 44 to 56 the composition is skewed to gly residues; sequence GGSGGGGGGGGGC. Low complexity predominate over residues 57–88; that stretch reads SSSSSYCSFPPSLSSSSSSSPTSGSPRGSHSS.

The polypeptide is Leucine rich adaptor protein 1-like (LURAP1L) (Homo sapiens (Human)).